A 486-amino-acid polypeptide reads, in one-letter code: Cardiolipin synthase A (486 aa).

2 consecutive transmembrane segments (helical) span residues 3 to 23 (TFYTVVSWLIILGYWLLIAGV) and 38 to 58 (MAWLLVIYILPLVGIVAYLSV). PLD phosphodiesterase domains are found at residues 219 to 246 (MDLRQHRKMIMIDNYIAYTGSMNMVDPR) and 399 to 426 (EGGLLHTKSVLVDGELSLVGTVNLDMRS). Active-site residues include histidine 224, lysine 226, aspartate 231, histidine 404, lysine 406, and aspartate 411.

Belongs to the phospholipase D family. Cardiolipin synthase subfamily. ClsA sub-subfamily.

It is found in the cell inner membrane. The catalysed reaction is 2 a 1,2-diacyl-sn-glycero-3-phospho-(1'-sn-glycerol) = a cardiolipin + glycerol. Functionally, catalyzes the reversible phosphatidyl group transfer from one phosphatidylglycerol molecule to another to form cardiolipin (CL) (diphosphatidylglycerol) and glycerol. This Cronobacter sakazakii (strain ATCC BAA-894) (Enterobacter sakazakii) protein is Cardiolipin synthase A.